Reading from the N-terminus, the 265-residue chain is Diphthine synthase (265 aa).

S-adenosyl-L-methionine is bound by residues leucine 10, aspartate 87, valine 90, 115–116, leucine 166, alanine 209, and histidine 234; that span reads SI.

This sequence belongs to the diphthine synthase family. In terms of assembly, homodimer.

It carries out the reaction 2-[(3S)-amino-3-carboxypropyl]-L-histidyl-[translation elongation factor 2] + 3 S-adenosyl-L-methionine = diphthine-[translation elongation factor 2] + 3 S-adenosyl-L-homocysteine + 3 H(+). The protein operates within protein modification; peptidyl-diphthamide biosynthesis. S-adenosyl-L-methionine-dependent methyltransferase that catalyzes the trimethylation of the amino group of the modified target histidine residue in translation elongation factor 2 (EF-2), to form an intermediate called diphthine. The three successive methylation reactions represent the second step of diphthamide biosynthesis. The polypeptide is Diphthine synthase (Pyrococcus horikoshii (strain ATCC 700860 / DSM 12428 / JCM 9974 / NBRC 100139 / OT-3)).